The sequence spans 412 residues: Putative competence-damage inducible protein (412 aa).

It belongs to the CinA family.

The protein is Putative competence-damage inducible protein of Clostridium perfringens (strain ATCC 13124 / DSM 756 / JCM 1290 / NCIMB 6125 / NCTC 8237 / Type A).